A 2335-amino-acid chain; its full sequence is Pre-mRNA-processing-splicing factor 8 (2335 aa).

An N-acetylalanine modification is found at Ala2. The segment at 812 to 1303 is reverse transcriptase homology domain; sequence TTVHWLESRR…KIQTRIKIGL (492 aa). Residues Ser859 and Ser1358 each carry the phosphoserine modification. Residues 1304–1577 are linker; that stretch reads NSKMPSRFPP…TLKISLIQIF (274 aa). Lys1425 is modified (N6,N6-dimethyllysine). Position 1463 is an N6-acetyllysine (Lys1463). The segment at 1513-1526 is important for branch point selection; the sequence is MKWKKLTNAQRSGL. A restriction endonuclease homology domain region spans residues 1581 to 1752; that stretch reads LWQKIHESIV…LRERIRKGLQ (172 aa). The tract at residues 1669–2034 is involved in interaction with pre-mRNA 5' splice site; the sequence is GDYDSHDIER…QIAEIEKQTK (366 aa). Residues 1767-2020 form an RNase H homology domain region; it reads NYGELFSNQI…ILGMEISAPS (254 aa). The region spanning 2103-2234 is the MPN domain; that stretch reads TYILPKNVLK…LTAYKLTPSG (132 aa). Positions 2301-2335 are required for interaction with EFTUD2 and SNRNP200; the sequence is PKEFYHEVHRPSHFLNFALLQEGEVYSADREDLYA.

As to quaternary structure, part of the U5 snRNP complex. Component of the U4/U6-U5 tri-snRNP complex composed of the U4, U6 and U5 snRNAs and at least PRPF3, PRPF4, PRPF6, PRPF8, PRPF31, SNRNP200, TXNL4A, SNRNP40, DDX23, CD2BP2, PPIH, SNU13, EFTUD2, SART1 and USP39. Component of the U5.U4atac/U6atac snRNP complexes in U12-dependent spliceosomes. Within the minor spliceosome, which acts on U12-type introns, interacts with PPIL2 and RBM48. Core component of U2-type precatalytic, catalytic and postcatalytic spliceosomal complexes. Found in a mRNA splicing-dependent exon junction complex (EJC) with SRRM1. Interacts with U5 snRNP proteins SNRP116 and SNRNP40. Interacts with EFTUD2. Interacts (via the MPN (JAB/Mov34) domain) with PRPF3 ('Lys-63'-linked polyubiquitinated); may stabilize the U4/U6-U5 tri-snRNP complex. Interacts (via RNase H homology domain) with AAR2. Interacts with RPAP3 and URI1 in a ZNHIT2-dependent manner. Interacts with C9orf78. Interacts with SNRNP200; the interaction is direct. Interacts with TSSC4; the interaction is direct. As to expression, widely expressed.

It is found in the nucleus. It localises to the nucleus speckle. In terms of biological role, plays a role in pre-mRNA splicing as core component of precatalytic, catalytic and postcatalytic spliceosomal complexes, both of the predominant U2-type spliceosome and the minor U12-type spliceosome. Functions as a scaffold that mediates the ordered assembly of spliceosomal proteins and snRNAs. Required for the assembly of the U4/U6-U5 tri-snRNP complex, a building block of the spliceosome. Functions as a scaffold that positions spliceosomal U2, U5 and U6 snRNAs at splice sites on pre-mRNA substrates, so that splicing can occur. Interacts with both the 5' and the 3' splice site. In Homo sapiens (Human), this protein is Pre-mRNA-processing-splicing factor 8 (PRPF8).